The sequence spans 475 residues: F-box/kelch-repeat protein At1g22040 (475 aa).

Residues 1–28 form a disordered region; sequence MGSVMSLSCSKRKATSQDVECSSESRKR. One can recognise an F-box domain in the interval 41 to 87; sequence CRLIPSLPDELSIQILARLPRICYSSVRLVSRRWRSAVSTSEVYSLR. Kelch repeat units follow at residues 94-140, 182-228, 229-279, 306-350, and 352-401; these read EEWL…KSLS, GLYV…VLNK, KLYV…AFLA, PFFV…VDGE, and YAFD…GFHG.

The sequence is that of F-box/kelch-repeat protein At1g22040 from Arabidopsis thaliana (Mouse-ear cress).